Reading from the N-terminus, the 422-residue chain is ATP phosphoribosyltransferase regulatory subunit (422 aa).

The protein belongs to the class-II aminoacyl-tRNA synthetase family. HisZ subfamily. Heteromultimer composed of HisG and HisZ subunits.

It localises to the cytoplasm. It functions in the pathway amino-acid biosynthesis; L-histidine biosynthesis; L-histidine from 5-phospho-alpha-D-ribose 1-diphosphate: step 1/9. Its function is as follows. Required for the first step of histidine biosynthesis. May allow the feedback regulation of ATP phosphoribosyltransferase activity by histidine. The chain is ATP phosphoribosyltransferase regulatory subunit from Clostridium botulinum (strain 657 / Type Ba4).